The chain runs to 219 residues: Ribosomal RNA small subunit methyltransferase G (219 aa).

S-adenosyl-L-methionine contacts are provided by residues Gly-78, Phe-83, 129–130 (GE), and Arg-146.

This sequence belongs to the methyltransferase superfamily. RNA methyltransferase RsmG family.

It localises to the cytoplasm. It catalyses the reaction guanosine(527) in 16S rRNA + S-adenosyl-L-methionine = N(7)-methylguanosine(527) in 16S rRNA + S-adenosyl-L-homocysteine. In terms of biological role, specifically methylates the N7 position of guanine in position 527 of 16S rRNA. This is Ribosomal RNA small subunit methyltransferase G from Geotalea uraniireducens (strain Rf4) (Geobacter uraniireducens).